Reading from the N-terminus, the 956-residue chain is Probable hypoxanthine oxidase XdhD (956 aa).

3 residues coordinate Mo-molybdopterin: Gln414, Phe445, and Ala727.

This sequence belongs to the xanthine dehydrogenase family. Requires [2Fe-2S] cluster as cofactor. The cofactor is Mo-molybdopterin.

Functionally, probably has no xanthine dehydrogenase activity; however deletion results in increased adenine sensitivity, suggesting that this protein contributes to the conversion of adenine to guanine nucleotides during purine salvage. The polypeptide is Probable hypoxanthine oxidase XdhD (xdhD) (Escherichia coli (strain K12)).